Here is a 518-residue protein sequence, read N- to C-terminus: Protein translocase subunit SecD (518 aa).

The next 6 membrane-spanning stretches (helical) occupy residues 9–29, 356–376, 377–397, 406–426, 463–483, and 486–506; these read IVLSIICTVFAIICALPNFIQ, GKKAGLIGFVAVCIFMILSYG, VIGLFANIALILALLYILALL, LPGIAGIILTIGMAVDANVLI, LIVAFALYIFGVGAIKGFAVA, and IGIISSMFSAIIITKLLIDVW.

This sequence belongs to the SecD/SecF family. SecD subfamily. In terms of assembly, forms a complex with SecF. Part of the essential Sec protein translocation apparatus which comprises SecA, SecYEG and auxiliary proteins SecDF-YajC and YidC.

It localises to the cell inner membrane. In terms of biological role, part of the Sec protein translocase complex. Interacts with the SecYEG preprotein conducting channel. SecDF uses the proton motive force (PMF) to complete protein translocation after the ATP-dependent function of SecA. The protein is Protein translocase subunit SecD of Rickettsia prowazekii (strain Madrid E).